Here is a 544-residue protein sequence, read N- to C-terminus: Chaperonin GroEL 1 (544 aa).

Residues 29–32 (TLGP), 86–90 (DGTTT), glycine 413, 479–481 (NAA), and aspartate 495 contribute to the ATP site.

This sequence belongs to the chaperonin (HSP60) family. As to quaternary structure, forms a cylinder of 14 subunits composed of two heptameric rings stacked back-to-back. Interacts with the co-chaperonin GroES.

The protein localises to the cytoplasm. The catalysed reaction is ATP + H2O + a folded polypeptide = ADP + phosphate + an unfolded polypeptide.. Together with its co-chaperonin GroES, plays an essential role in assisting protein folding. The GroEL-GroES system forms a nano-cage that allows encapsulation of the non-native substrate proteins and provides a physical environment optimized to promote and accelerate protein folding. The chain is Chaperonin GroEL 1 from Synechococcus sp. (strain CC9902).